Reading from the N-terminus, the 109-residue chain is uncharacterized protein (109 aa).

Positions 1 to 25 (METKPNALTGTSLSSTSGQTTQKSI) are disordered. The segment covering 8 to 22 (LTGTSLSSTSGQTTQ) has biased composition (low complexity). The chain crosses the membrane as a helical span at residues 42-62 (TFGLMAILNLALLLWTLLATL). A disordered region spans residues 84–109 (TTLQKNTPSAKNGLKNTTNKHSHEDM). Residues 91 to 102 (PSAKNGLKNTTN) show a composition bias toward polar residues.

The protein localises to the host membrane. This is an uncharacterized protein from Bdellovibrio phage phiMH2K (Bacteriophage phiMH2K).